A 168-amino-acid polypeptide reads, in one-letter code: S-ribosylhomocysteine lyase (168 aa).

Fe cation-binding residues include His-54, His-58, and Cys-128.

Belongs to the LuxS family. Homodimer. Fe cation is required as a cofactor.

The catalysed reaction is S-(5-deoxy-D-ribos-5-yl)-L-homocysteine = (S)-4,5-dihydroxypentane-2,3-dione + L-homocysteine. Functionally, involved in the synthesis of autoinducer 2 (AI-2) which is secreted by bacteria and is used to communicate both the cell density and the metabolic potential of the environment. The regulation of gene expression in response to changes in cell density is called quorum sensing. Catalyzes the transformation of S-ribosylhomocysteine (RHC) to homocysteine (HC) and 4,5-dihydroxy-2,3-pentadione (DPD). The sequence is that of S-ribosylhomocysteine lyase from Mannheimia succiniciproducens (strain KCTC 0769BP / MBEL55E).